We begin with the raw amino-acid sequence, 511 residues long: 60 kDa neurofilament protein (511 aa).

Positions 1-32 (MSVTQKKTEISTTTTYEGESRPSSGMSGFSYS) are disordered. The interval 1–99 (MSVTQKKTEI…KANREREKQD (99 aa)) is head. The span at 21–30 (RPSSGMSGFS) shows a compositional bias: polar residues. The IF rod domain maps to 96 to 449 (EKQDMRDLNE…KLLEGEESRV (354 aa)). The segment at 100-135 (MRDLNERFANYIEKVRFLEAQNKKLAGELEELKSKW) is coil 1A. The segment at 136–145 (GKETSAIKEM) is linker 1. A coil 1B region spans residues 146–284 (YETELEEARK…VHAQELKELA (139 aa)). The tract at residues 285-303 (ALAYRDTTAENREFWRNEL) is linker 12. The tract at residues 304–449 (AQAIRDIQQE…KLLEGEESRV (146 aa)) is coil 2. A tail region spans residues 450–511 (GMKQIVEQVV…EEKKSMGSSD (62 aa)). Residues 479–511 (GYEATGGITTTTTTSSQERRSMSEEKKSMGSSD) form a disordered region. Residues 483–492 (TGGITTTTTT) are compositionally biased toward low complexity. Residues 495–511 (QERRSMSEEKKSMGSSD) show a composition bias toward basic and acidic residues.

It belongs to the intermediate filament family.

In terms of biological role, major squid neurofilament protein. The chain is 60 kDa neurofilament protein from Doryteuthis pealeii (Longfin inshore squid).